The sequence spans 57 residues: UPF0391 membrane protein BRADO5617 (57 aa).

2 consecutive transmembrane segments (helical) span residues 1–21 and 30–50; these read MLGW…LGFG and IAKI…VVGL.

It belongs to the UPF0391 family.

It localises to the cell membrane. In Bradyrhizobium sp. (strain ORS 278), this protein is UPF0391 membrane protein BRADO5617.